The chain runs to 304 residues: MGIDFLFILKALIIAIVEGLTEFVPVSSTGHMILVGDLIHFNTQSGGFPEMYEVVIQLGAILAVVVLYWRKISSSVVEFLCYIFSFIGLKTSGDKRKYEKRLAESETGFRFGINVIIGTIPAAILGLLFHDEIKEYLFSTKTVAIGFIVGGILLIVIENNFRKRAKRSKIVKDIDKMTYGQSLLVGCFQCLSLWPGMSRSASTIMGGWISGLSTTVATEFTFFLAIPAMVGASGLDLFKFDYSQMNATNWISLILGFIVAFIVSLVVIDKFINYLKKKPMRVFAIYRVFAGIVLAILIFTKVIS.

8 consecutive transmembrane segments (helical) span residues phenylalanine 5–proline 25, glycine 47–leucine 67, isoleucine 72–serine 92, phenylalanine 111–aspartate 131, leucine 137–isoleucine 157, isoleucine 209–glycine 231, threonine 248–isoleucine 268, and phenylalanine 283–isoleucine 303.

Belongs to the UppP family.

The protein resides in the cell membrane. It catalyses the reaction di-trans,octa-cis-undecaprenyl diphosphate + H2O = di-trans,octa-cis-undecaprenyl phosphate + phosphate + H(+). In terms of biological role, catalyzes the dephosphorylation of undecaprenyl diphosphate (UPP). Confers resistance to bacitracin. The sequence is that of Undecaprenyl-diphosphatase from Clostridium perfringens (strain ATCC 13124 / DSM 756 / JCM 1290 / NCIMB 6125 / NCTC 8237 / Type A).